Consider the following 93-residue polypeptide: Acylphosphatase (93 aa).

Cys5 and Cys49 are disulfide-bonded. Residues 5–93 enclose the Acylphosphatase-like domain; that stretch reads CIIAWVYGRV…ETLTGFSIRY (89 aa). Active-site residues include Arg20 and Asn38.

Belongs to the acylphosphatase family.

The catalysed reaction is an acyl phosphate + H2O = a carboxylate + phosphate + H(+). This Salmonella typhi protein is Acylphosphatase.